A 441-amino-acid chain; its full sequence is Tubulin beta-1 chain (441 aa).

GTP contacts are provided by Gln-11, Glu-69, Ser-138, Gly-142, Thr-143, Gly-144, Asn-204, and Asn-226. A Mg(2+)-binding site is contributed by Glu-69.

This sequence belongs to the tubulin family. Dimer of alpha and beta chains. A typical microtubule is a hollow water-filled tube with an outer diameter of 25 nm and an inner diameter of 15 nM. Alpha-beta heterodimers associate head-to-tail to form protofilaments running lengthwise along the microtubule wall with the beta-tubulin subunit facing the microtubule plus end conferring a structural polarity. Microtubules usually have 13 protofilaments but different protofilament numbers can be found in some organisms and specialized cells. It depends on Mg(2+) as a cofactor. In terms of tissue distribution, expressed primarily in touch receptor neurons.

Its subcellular location is the cytoplasm. It localises to the cytoskeleton. In terms of biological role, tubulin is the major constituent of microtubules, a cylinder consisting of laterally associated linear protofilaments composed of alpha- and beta-tubulin heterodimers. Microtubules grow by the addition of GTP-tubulin dimers to the microtubule end, where a stabilizing cap forms. Below the cap, tubulin dimers are in GDP-bound state, owing to GTPase activity of alpha-tubulin. Plays a role in mechanosensory transduction (touch sensitivity). Functionally, mec-7 beta-tubulin is required for the production of 15-protofilament microtubules. The polypeptide is Tubulin beta-1 chain (mec-7) (Caenorhabditis briggsae).